We begin with the raw amino-acid sequence, 283 residues long: Tetraspanin-33 (283 aa).

Over 1–24 (MARRPGVPAAYGDEFSFVSPLVKY) the chain is Cytoplasmic. The helical transmembrane segment at 25–45 (LLFFFNMLFWVISMVMVAVGV) threads the bilayer. Topologically, residues 46–64 (YARLMKHAEAALACLAVDP) are extracellular. The helical transmembrane segment at 65–85 (AILLIVVGVLMFLLTFCGCIG) threads the bilayer. At 86–96 (SLRENICLLQT) the chain is on the cytoplasmic side. Residues 97–117 (FSLCLTIVFLLQLAAGILGFV) form a helical membrane-spanning segment. The Extracellular segment spans residues 118–235 (FSDKARGKVS…DKLVNWIHSN (118 aa)). 4 cysteine pairs are disulfide-bonded: Cys-156–Cys-224, Cys-157–Cys-189, Cys-173–Cys-183, and Cys-190–Cys-203. N-linked (GlcNAc...) asparagine glycosylation is present at Asn-172. The helical transmembrane segment at 236–256 (LFLLGGVALGLAIPQLVGILL) threads the bilayer. Topologically, residues 257-283 (SQVLVNQIKDQIKLQLYNQQHRADPWY) are cytoplasmic.

Belongs to the tetraspanin (TM4SF) family. In terms of assembly, homodimer; disulfide-linked. Interacts (via extracellular domain) with ADAM10 (via extracellular domain). Interacts (via cytoplasmic domain) with PLEKHA7 (via WW domains); the interaction is dependent on PDZD11 being bound to PLEKHA7 and facilitates the docking of ADAM10 to zonula adherens. As to expression, predominantly expressed in erythroblasts.

The protein localises to the cell membrane. Its subcellular location is the cell junction. The protein resides in the adherens junction. It localises to the cytoplasm. In terms of biological role, part of TspanC8 subgroup, composed of 6 members that interact with the transmembrane metalloprotease ADAM10. This interaction is required for ADAM10 exit from the endoplasmic reticulum and for enzymatic maturation and trafficking to the cell surface as well as substrate specificity. Different TspanC8/ADAM10 complexes have distinct substrates. Plays an important role in normal erythropoiesis. It has a role in the differentiation of erythroid progenitors. Negatively regulates ligand-induced Notch activity probably by regulating ADAM10 activity. Mediates docking of ADAM10 to zonula adherens by interacting with ADAM10 and, in a PDZD11-dependent manner, with the zonula adherens protein PLEKHA7. This chain is Tetraspanin-33 (Tspan33), found in Mus musculus (Mouse).